We begin with the raw amino-acid sequence, 378 residues long: Alkanesulfonate monooxygenase (378 aa).

Belongs to the SsuD family.

The catalysed reaction is an alkanesulfonate + FMNH2 + O2 = an aldehyde + FMN + sulfite + H2O + 2 H(+). Catalyzes the desulfonation of aliphatic sulfonates. This is Alkanesulfonate monooxygenase from Bacillus velezensis (strain DSM 23117 / BGSC 10A6 / LMG 26770 / FZB42) (Bacillus amyloliquefaciens subsp. plantarum).